We begin with the raw amino-acid sequence, 80 residues long: U-poneritoxin(01)-Om3a (80 aa).

A signal peptide spans 1–25 (MKPSGLALAFLVVFMMAIMYNSVQA). Residues 26-39 (AAIADADAEAEAIA) constitute a propeptide that is removed on maturation.

It belongs to the formicidae venom precursor-01 superfamily. In terms of processing, truncated sequences of this peptide have also been found in the venom. It is possible they have been cleaved in the venom. As to expression, expressed by the venom gland.

Its subcellular location is the secreted. Cationic amphipathic alpha-helical peptide with antimicrobial activities against E.coli (MIC=3.1 uM), S.aureus (MIC=25 uM), and S.cerevisiae (MIC=50 uM). Also shows histamine-releasing activity (37.5% at 10 uM). Does not show hemolytic activity, even at 50 uM. The chain is U-poneritoxin(01)-Om3a from Odontomachus monticola (Trap-jaw ant).